A 637-amino-acid chain; its full sequence is Threonine--tRNA ligase (637 aa).

In terms of domain architecture, TGS spans 1–61; that stretch reads MPNVKLPDGN…KEDCSLIIVT (61 aa). The catalytic stretch occupies residues 242–533; the sequence is DHRKLGKALD…LIEHYAGKLP (292 aa). Zn(2+) is bound by residues C333, H384, and H510.

The protein belongs to the class-II aminoacyl-tRNA synthetase family. Homodimer. Zn(2+) serves as cofactor.

It localises to the cytoplasm. The enzyme catalyses tRNA(Thr) + L-threonine + ATP = L-threonyl-tRNA(Thr) + AMP + diphosphate + H(+). Its function is as follows. Catalyzes the attachment of threonine to tRNA(Thr) in a two-step reaction: L-threonine is first activated by ATP to form Thr-AMP and then transferred to the acceptor end of tRNA(Thr). Also edits incorrectly charged L-seryl-tRNA(Thr). In Legionella pneumophila subsp. pneumophila (strain Philadelphia 1 / ATCC 33152 / DSM 7513), this protein is Threonine--tRNA ligase.